The following is a 311-amino-acid chain: MEMMVHGRRDEQYGGLRLGLGLGLSLGVAGGAADDEQPPPRRGAAPPPQQQLCGWNGGGLFSSSSSDHRGRSAMMACHDVIEMPFLRGIDVNRAPAAETTTTTARGPSCSEEDEEPGASSPNSTLSSLSGKRGAPSAATAAAAAASDDEDSGGGSRKKLRLSKDQAAVLEDTFKEHNTLNPKQKAALARQLNLKPRQVEVWFQNRRARTKLKQTEVDCELLKRCCETLTDENRRLHRELQELRALKLATAAAAPHHLYGARVPPPTTLTMCPSCERVASAATTTRNNSGAAPARPVPTRPWPPAAAQRSSA.

2 disordered regions span residues 29–69 (AGGA…SDHR) and 97–160 (AETT…KKLR). Residues 119–145 (SSPNSTLSSLSGKRGAPSAATAAAAAA) are compositionally biased toward low complexity. The segment at residues 154–213 (GSRKKLRLSKDQAAVLEDTFKEHNTLNPKQKAALARQLNLKPRQVEVWFQNRRARTKLKQ) is a DNA-binding region (homeobox). Residues 212-256 (KQTEVDCELLKRCCETLTDENRRLHRELQELRALKLATAAAAPHH) are leucine-zipper. Positions 279–311 (SAATTTRNNSGAAPARPVPTRPWPPAAAQRSSA) are disordered. The span at 280–289 (AATTTRNNSG) shows a compositional bias: polar residues. Over residues 294 to 303 (RPVPTRPWPP) the composition is skewed to pro residues.

This sequence belongs to the HD-ZIP homeobox family. Class II subfamily. As to quaternary structure, homodimer. May form a heterodimer with HOX2, HOX3 or HOX7. In terms of tissue distribution, expressed in root provascular and vascular cylinder, provascular and vascular strands of leaves, provascular and vascular strands of the whole panicle, in mature embryo provascular bundles of scutellum and embryonic axis and provascular and vascular strands of young immature spikelet organs. Expressed in differentiating and differentiated xylem and phloem elements, and in outer and inner bundle sheath cells of all vascular bundles. Expressed in auricles, ligules, culm, guard cells brac hairs and pollen.

The protein resides in the nucleus. Its function is as follows. Probable transcription repressor involved leaf development. Binds to the DNA sequence 5'-CAAT[GC]ATTG-3'. May act as a regulatory switch to specify provascular cell fate. This is Homeobox-leucine zipper protein HOX1 (HOX1) from Oryza sativa subsp. japonica (Rice).